Here is a 225-residue protein sequence, read N- to C-terminus: Superantigen-like protein 11 (225 aa).

An N-terminal signal peptide occupies residues 1–30 (MKLKNIAKASLALGILTTGMITTTAQPVKA). Residues 94–196 (VDIFVVRENS…RITMKDGGFY (103 aa)) are sialyl Lewis X-binding.

The protein belongs to the staphylococcal/streptococcal toxin family. In terms of assembly, homodimer (via its C-terminal domain). Interacts with host FCAR and SELPLG (via sialyl Lewis X).

It localises to the secreted. Its function is as follows. Secreted protein that plays a role in the inhibition of host immune system. Targets myeloid cells such as monocytes or granulocytes through binding with sialyllactosamine-containing glycoproteins. Prevents initial rolling of neutrophils toward the site of infection by interacting with host SELPLG. Disrupts neutrophil motility by induction of cell adhesion via interacting with glycans but independently of SELPLG. In Staphylococcus aureus (strain Newman), this protein is Superantigen-like protein 11.